The chain runs to 341 residues: MFYKIAQKVMFQMDPEKAHNLAIGSLKSTANSPLNCFYAQKLQAAPVEFMGLTFPNPVGLAAGMDKDGECIDAFHAMGFGHVEVGTVTPRPQPGNDQPRLFRLKPAKAIINRMGFNNKGVDNLVANLKAAKSGAMVGVNIGKNKDTPVEQGKEDYLICMEKVYPYAAYIAVNISSPNTPGLRSLQYGDLLDDLLGSLKAKQKDLAERHGKYVPIALKIAPDLEPDEIEKIAESLIRNEFDGAIATNTTLTRDGVSGLVNSNEAGGLSGKPLNSLSTKVIKQLADCLKGQVPIIGVGGINSAADALDKLDAGATMVQIYSGFIYRGPELIKEIVDAYRVKSK.

Residues 62-66 (AGMDK) and Thr86 contribute to the FMN site. Lys66 lines the substrate pocket. A substrate-binding site is contributed by 111–115 (NRMGF). FMN-binding residues include Asn139 and Asn172. Residue Asn172 participates in substrate binding. The Nucleophile role is filled by Ser175. Residue Asn177 participates in substrate binding. Residues Lys217 and Thr245 each coordinate FMN. Position 246 to 247 (246 to 247 (NT)) interacts with substrate. FMN is bound by residues Gly268, Gly297, and 318 to 319 (YS).

The protein belongs to the dihydroorotate dehydrogenase family. Type 2 subfamily. As to quaternary structure, monomer. Requires FMN as cofactor.

It is found in the cell membrane. The catalysed reaction is (S)-dihydroorotate + a quinone = orotate + a quinol. Its pathway is pyrimidine metabolism; UMP biosynthesis via de novo pathway; orotate from (S)-dihydroorotate (quinone route): step 1/1. Functionally, catalyzes the conversion of dihydroorotate to orotate with quinone as electron acceptor. The polypeptide is Dihydroorotate dehydrogenase (quinone) (Shewanella loihica (strain ATCC BAA-1088 / PV-4)).